The chain runs to 376 residues: Putative clathrin assembly protein At1g25240 (376 aa).

Residues 25–156 enclose the ENTH domain; it reads KTSFRNPDLD…FFLSDQIRRR (132 aa).

The protein localises to the membrane. Its subcellular location is the clathrin-coated pit. It localises to the golgi apparatus. The protein resides in the cytoplasmic vesicle. It is found in the clathrin-coated vesicle. This is Putative clathrin assembly protein At1g25240 from Arabidopsis thaliana (Mouse-ear cress).